A 259-amino-acid polypeptide reads, in one-letter code: MIVDISCNITDSQFKNVEDTILKCKEAKVIPIFVGVDYTTSLKSCNYAEKFDTLFYAGIHPLYSENSVYIPVNSDRCIAIGECGLDYYRLQFSSIETQKRIFKVQLDLKAERYFLHCRDSHRDFMEILSDYNFKGVVHSFTGTVEESKEIIKKGLFIGINGCSLKNEEGIEVVKNLPLNSILVETDSPYCKIRKSYAGYKFVNNYQKHKSNEPYLIYEIIEAIANIKNIPINILLDTLLSNNINFYGERLVECFEKWRL.

A divalent metal cation-binding residues include glutamate 82, histidine 116, histidine 138, and aspartate 186.

Belongs to the metallo-dependent hydrolases superfamily. TatD-type hydrolase family. Requires a divalent metal cation as cofactor.

Its subcellular location is the nucleus. Functionally, putative deoxyribonuclease. This is Putative deoxyribonuclease TATDN1 homolog from Vairimorpha ceranae (strain BRL01) (Microsporidian parasite).